A 300-amino-acid polypeptide reads, in one-letter code: MNYYSINLAKAHLLHYPCPLNINFLWNYGFLLGIVFFIQILKGVLLALVILQKLSYAYYSVQHILRAIMDGWCFRYMHATGASFVFILTYLHILRGLNYSYSYLPLSWISGLMIFLISIVTAFYGYVLPWGQMSFWNTTVITNLLYLFRTCFMDCGGYLVSDPTLKRFFVFIYFPFIALCQSLFGILPLSHPDNAITVDRYATPLHIVPEWYFLPFYAMLKTIPNKTAGLLVMLASLQILFLLAEQRNLTTLIHFKFAFGAREYSVPTICYMSSMLIWIGCQLPQILHFIWSFIYYIILF.

6 consecutive transmembrane segments (helical) span residues 28–48 (YGFL…LLAL), 72–94 (WCFR…LHIL), 107–127 (SWIS…YGYV), 168–187 (FFVF…FGIL), 223–243 (IPNK…LFLL), and 279–299 (IGCQ…YIIL). Heme b contacts are provided by His-78 and His-92.

Belongs to the cytochrome b family. As to quaternary structure, the main subunits of complex b-c1 are: cytochrome b, cytochrome c1 and the Rieske protein. The cofactor is heme b.

The protein localises to the mitochondrion inner membrane. Functionally, component of the ubiquinol-cytochrome c reductase complex (complex III or cytochrome b-c1 complex) that is part of the mitochondrial respiratory chain. The b-c1 complex mediates electron transfer from ubiquinol to cytochrome c. Contributes to the generation of a proton gradient across the mitochondrial membrane that is then used for ATP synthesis. The polypeptide is Cytochrome b (MT-CYB) (Plasmodium gallinaceum).